We begin with the raw amino-acid sequence, 709 residues long: MTVFKTAPLLIAALAASSCGGGGSGAAVDYDFNVRPSYLNDLRQASYDGAGNDLLTGGLGRSGLQDDSPPGYAGSQPTAEELRRNAIYVNYRALVDTTSEGGYGRLYGPNVDAQGRATSGEGMVAGTEAIAYSDDGSGRRNVTLMVQVPDAFDRTRPCIITATSSGSRGIYGGIPTGEWGLKRGCAVAYTDKGTGAAPHDLQADTVALIDGTRTSATLAGTRAAFDAGLSAADLAAFNGATPQRLAFKHAHSGQNPEKDWGLSTLQAVEFAFYVLNERFGDRSPGGQALRTFTPANTTVIASSLSNGGGAAIAAAEQDTRGLIDGVAVSEPSVQMPANAGVTVQRGGRTVAVNGLPLIDYTTQAHLYQACAALAPSLASTPFAAAFAVRFADPAFPVAANRCAGLKARGLLSAATTAAQAEEALARLTAYGWEPESGALHASLAAFEVAPSIAVTYANALSRASVQDRLCGYSFATTSAIGAVQPTPAAVTNTLFATGNGIPPTAGVQLVNDRSRGVPVRDLFSSNAAGVPTWNLEGALCLRSLVTGTDAAARRLQSGLDETRRTGNLQGKPAIIVHGRDDALIPVNHTSRPYAALNRRVEGAASRLSYIEVTNAQHFDAFIGLPATLPGYDSRYIPLHLYLNRALDAMYAHLVNGEPLPASQVVRTVPRGGTPGSAPAITAANVPPIAAMPVAADAVAITSGAIAVPD.

An N-terminal signal peptide occupies residues 1–26 (MTVFKTAPLLIAALAASSCGGGGSGA). The tract at residues 58 to 77 (GLGRSGLQDDSPPGYAGSQP) is disordered. The Charge relay system role is filled by S305.

Belongs to the D-(-)-3-hydroxybutyrate oligomer hydrolase family.

The protein resides in the secreted. It carries out the reaction (3R)-hydroxybutanoate dimer + H2O = 2 (R)-3-hydroxybutanoate + H(+). It participates in lipid metabolism; butanoate metabolism. Functionally, participates in the degradation of poly-3-hydroxybutyrate (PHB). It works downstream of poly(3-hydroxybutyrate) depolymerase, hydrolyzing D(-)-3-hydroxybutyrate oligomers of various length (3HB-oligomers) into 3HB-monomers. In Paracidovorax citrulli (strain AAC00-1) (Acidovorax citrulli), this protein is D-(-)-3-hydroxybutyrate oligomer hydrolase.